A 366-amino-acid polypeptide reads, in one-letter code: Homer protein homolog 1 (366 aa).

The residue at position 2 (Gly2) is an N-acetylglycine. The WH1 domain maps to 2–110 (GEQPIFSTRA…EKFQEFKEAA (109 aa)). A disordered region spans residues 114–189 (KEKSQEKMEL…RTQALSHASS (76 aa)). Polar residues-rich tracts occupy residues 138 to 147 (SPLTPESING) and 155 to 170 (DVTQNSEPRAEPTQNA). Residues 193-364 (KHWEAELATL…LRDNLAKLLE (172 aa)) adopt a coiled-coil conformation. Residues 302–366 (KLQEVEIRNK…DNLAKLLECS (65 aa)) are required for tetramerization. Residue Ser318 is modified to Phosphoserine.

The protein belongs to the Homer family. Tetramer; this tetrameric structure is critical for forming the high-order complex with SHANK1, which in turn is necessary for the structural and functional integrity of dendritic spines. Isoform 1, isoform 2 and isoform 3 encode a coiled-coil structure that mediates homo- and heteromultimerization. Interacts with GRM1, GRM5, ITPR1, DNM3, RYR1, RYR2 and SHANK3. Interacts with IFT57 and OPHN1. Interacts with SHANK1; forms high-order polymerized complex with a mesh-like network structure, at least composed of SHANK1, HOMER1 and DLGAP1; the complex formation is SHANK1 multimerization dependent. Interacts with NFATC4. Interacts with DAGLA (via PPXXF motif); this interaction is required for the cell membrane localization of DAGLA. Interacts with SRGAP2. Expressed in skeletal muscle at the level of the Z line, in the forebrain and cerebellum. As to expression, expressed in cardiac and skeletal muscle. In terms of tissue distribution, expressed in the hippocampus. Expressed in skeletal muscle at the level of the Z line, in the heart, forebrain and cerebellum.

The protein resides in the cytoplasm. Its subcellular location is the postsynaptic density. It is found in the synapse. It localises to the cell projection. The protein localises to the dendritic spine. Functionally, postsynaptic density scaffolding protein. Binds and cross-links cytoplasmic regions of GRM1, GRM5, ITPR1, DNM3, RYR1, RYR2, SHANK1 and SHANK3. By physically linking GRM1 and GRM5 with ER-associated ITPR1 receptors, it aids the coupling of surface receptors to intracellular calcium release. May also couple GRM1 to PI3 kinase through its interaction with AGAP2. Isoform 1 regulates the trafficking and surface expression of GRM5. Differentially regulates the functions of the calcium activated channel ryanodine receptors RYR1 and RYR2. Isoform 1 decreases the activity of RYR2, and increases the activity of RYR1, whereas isoform 5 counteracts the effects by competing for binding sites. Isoform 3 regulates the trafficking and surface expression of GRM5. Isoform 5 acts as a natural dominant negative, in dynamic competition with constitutively expressed isoform 1, isoform 2 and isoform 3 to regulate synaptic metabotropic glutamate function. Isoform 5, may be involved in the structural changes that occur at synapses during long-lasting neuronal plasticity and development. Forms a high-order complex with SHANK1, which in turn is necessary for the structural and functional integrity of dendritic spines. Negatively regulates T cell activation by inhibiting the calcineurin-NFAT pathway. Acts by competing with calcineurin/PPP3CA for NFAT protein binding, hence preventing NFAT activation by PPP3CA. The sequence is that of Homer protein homolog 1 from Mus musculus (Mouse).